A 228-amino-acid polypeptide reads, in one-letter code: Protein-L-isoaspartate O-methyltransferase (228 aa).

S74 is an active-site residue.

The protein belongs to the methyltransferase superfamily. L-isoaspartyl/D-aspartyl protein methyltransferase family.

The protein localises to the cytoplasm. The enzyme catalyses [protein]-L-isoaspartate + S-adenosyl-L-methionine = [protein]-L-isoaspartate alpha-methyl ester + S-adenosyl-L-homocysteine. In terms of biological role, catalyzes the methyl esterification of L-isoaspartyl residues in peptides and proteins that result from spontaneous decomposition of normal L-aspartyl and L-asparaginyl residues. It plays a role in the repair and/or degradation of damaged proteins. The polypeptide is Protein-L-isoaspartate O-methyltransferase (Methylorubrum extorquens (strain PA1) (Methylobacterium extorquens)).